A 95-amino-acid polypeptide reads, in one-letter code: Aspartyl/glutamyl-tRNA(Asn/Gln) amidotransferase subunit C (95 aa).

It belongs to the GatC family. Heterotrimer of A, B and C subunits.

It carries out the reaction L-glutamyl-tRNA(Gln) + L-glutamine + ATP + H2O = L-glutaminyl-tRNA(Gln) + L-glutamate + ADP + phosphate + H(+). The catalysed reaction is L-aspartyl-tRNA(Asn) + L-glutamine + ATP + H2O = L-asparaginyl-tRNA(Asn) + L-glutamate + ADP + phosphate + 2 H(+). Functionally, allows the formation of correctly charged Asn-tRNA(Asn) or Gln-tRNA(Gln) through the transamidation of misacylated Asp-tRNA(Asn) or Glu-tRNA(Gln) in organisms which lack either or both of asparaginyl-tRNA or glutaminyl-tRNA synthetases. The reaction takes place in the presence of glutamine and ATP through an activated phospho-Asp-tRNA(Asn) or phospho-Glu-tRNA(Gln). The sequence is that of Aspartyl/glutamyl-tRNA(Asn/Gln) amidotransferase subunit C from Thioalkalivibrio sulfidiphilus (strain HL-EbGR7).